A 161-amino-acid polypeptide reads, in one-letter code: Phosphopantetheine adenylyltransferase (161 aa).

Threonine 10 contributes to the substrate binding site. ATP-binding positions include threonine 10–phenylalanine 11 and histidine 18. The substrate site is built by lysine 42, methionine 74, and arginine 88. ATP contacts are provided by residues glycine 89–arginine 91, glutamate 99, and tryptophan 124–serine 130.

The protein belongs to the bacterial CoaD family. As to quaternary structure, homohexamer. The cofactor is Mg(2+).

It is found in the cytoplasm. The catalysed reaction is (R)-4'-phosphopantetheine + ATP + H(+) = 3'-dephospho-CoA + diphosphate. The protein operates within cofactor biosynthesis; coenzyme A biosynthesis; CoA from (R)-pantothenate: step 4/5. Reversibly transfers an adenylyl group from ATP to 4'-phosphopantetheine, yielding dephospho-CoA (dPCoA) and pyrophosphate. This chain is Phosphopantetheine adenylyltransferase, found in Serratia marcescens.